A 100-amino-acid polypeptide reads, in one-letter code: uncharacterized protein (100 aa).

The signal sequence occupies residues methionine 1 to glycine 17. Cysteine 18 carries N-palmitoyl cysteine lipidation. Cysteine 18 is lipidated: S-diacylglycerol cysteine.

It is found in the cell membrane. This is an uncharacterized protein from Salmonella paratyphi A (strain ATCC 9150 / SARB42).